A 348-amino-acid chain; its full sequence is Anthranilate phosphoribosyltransferase (348 aa).

5-phospho-alpha-D-ribose 1-diphosphate contacts are provided by residues Gly-80, 83-84 (GD), Thr-88, 90-93 (NVST), 108-116 (KHGNRSVSS), and Ser-120. Gly-80 contacts anthranilate. Position 92 (Ser-92) interacts with Mg(2+). Asn-111 is an anthranilate binding site. Residue Arg-166 coordinates anthranilate. Residues Asp-224 and Glu-225 each contribute to the Mg(2+) site.

The protein belongs to the anthranilate phosphoribosyltransferase family. Homodimer. Mg(2+) serves as cofactor.

It carries out the reaction N-(5-phospho-beta-D-ribosyl)anthranilate + diphosphate = 5-phospho-alpha-D-ribose 1-diphosphate + anthranilate. The protein operates within amino-acid biosynthesis; L-tryptophan biosynthesis; L-tryptophan from chorismate: step 2/5. Functionally, catalyzes the transfer of the phosphoribosyl group of 5-phosphorylribose-1-pyrophosphate (PRPP) to anthranilate to yield N-(5'-phosphoribosyl)-anthranilate (PRA). The protein is Anthranilate phosphoribosyltransferase of Sorangium cellulosum (strain So ce56) (Polyangium cellulosum (strain So ce56)).